A 546-amino-acid chain; its full sequence is 6'''-hydroxyparomomycin C oxidase (546 aa).

The interval 1–30 (MERLRGPSPLENTTARHPAPLGPAHRDGLE) is disordered. The active-site Proton acceptor is His-475.

The protein belongs to the GMC oxidoreductase family. FAD is required as a cofactor.

It functions in the pathway antibiotic biosynthesis; lividomycin biosynthesis. Its function is as follows. Glucosaminyl-6'-oxidase involved in the biosynthetic pathway of lividomycin by mediating FAD-dependent dehydrogenation of 6'''-hydroxyparomomycin to paromomycin. In Streptomyces lividus, this protein is 6'''-hydroxyparomomycin C oxidase (livQ).